Consider the following 322-residue polypeptide: Methionyl-tRNA formyltransferase (322 aa).

113 to 116 (SLLP) is a (6S)-5,6,7,8-tetrahydrofolate binding site.

The protein belongs to the Fmt family.

It carries out the reaction L-methionyl-tRNA(fMet) + (6R)-10-formyltetrahydrofolate = N-formyl-L-methionyl-tRNA(fMet) + (6S)-5,6,7,8-tetrahydrofolate + H(+). In terms of biological role, attaches a formyl group to the free amino group of methionyl-tRNA(fMet). The formyl group appears to play a dual role in the initiator identity of N-formylmethionyl-tRNA by promoting its recognition by IF2 and preventing the misappropriation of this tRNA by the elongation apparatus. The polypeptide is Methionyl-tRNA formyltransferase (Blochmanniella pennsylvanica (strain BPEN)).